Reading from the N-terminus, the 104-residue chain is Thioredoxin 1 (104 aa).

Residues 2–104 (VKIVTSQAEF…LKQLIEKYAA (103 aa)) form the Thioredoxin domain. Catalysis depends on nucleophile residues C30 and C33. The cysteines at positions 30 and 33 are disulfide-linked.

It belongs to the thioredoxin family. In terms of processing, the disulfide bond between Cys-30 and Cys-33 acts as a redox-active center and is reduced by thioredoxin reductase TRXR.

It is found in the cytoplasm. Its function is as follows. Participates in various redox reactions through the reversible oxidation of its active center dithiol to a disulfide and catalyzes dithiol-disulfide exchange reactions. By modifying the redox status of targeted proteins, induces changes in their structure and activity. Reduces oxidized glutathione (GSSG), thereby acting as a backup for the glutathione redox system. Reduces nitroglutathione (GSNO), a compound involved in the transport of nitric oxide (NO). Also reduces oxidative stress by detoxifying hydrogen peroxide, tert-butyl hydroperoxide and cumene hydroperoxide. Activates ornithine aminotransferase OAT by reducing a disulfide bond in the substrate binding loop, thereby enhancing the affinity of OAT for its substrates. May reduce S-adenosyl-L-homocysteine hydrolase SAHH. In Plasmodium falciparum (isolate 3D7), this protein is Thioredoxin 1.